Here is a 223-residue protein sequence, read N- to C-terminus: Cytidylate kinase (223 aa).

Residue 13-21 (GPSASGKGT) coordinates ATP.

It belongs to the cytidylate kinase family. Type 1 subfamily.

Its subcellular location is the cytoplasm. The catalysed reaction is CMP + ATP = CDP + ADP. It catalyses the reaction dCMP + ATP = dCDP + ADP. This chain is Cytidylate kinase, found in Nitrosomonas europaea (strain ATCC 19718 / CIP 103999 / KCTC 2705 / NBRC 14298).